The following is a 499-amino-acid chain: ADP,ATP carrier protein 5 (499 aa).

The next 11 helical transmembrane spans lie at 25–45 (LGKF…QNVL), 61–81 (IAGF…VIIY), 93–113 (IFYY…FVIY), 148–168 (YIVY…LLFW), 183–203 (FYTL…FLMM), 223–243 (ITLV…CCLL), 286–306 (LWLL…VEAV), 327–347 (LYIL…NNIM), 356–376 (AVIS…LIVF), 380–400 (ILSL…VSIG), and 468–488 (LISP…IYAV).

It belongs to the ADP/ATP translocase tlc family.

The protein resides in the cell membrane. Provides the rickettsial cell with host ATP in exchange for rickettsial ADP. This is an obligate exchange system. This energy acquiring activity is an important component of rickettsial parasitism. This Rickettsia conorii (strain ATCC VR-613 / Malish 7) protein is ADP,ATP carrier protein 5 (tlcE).